A 179-amino-acid polypeptide reads, in one-letter code: Coatomer subunit zeta-2 (179 aa).

This sequence belongs to the adaptor complexes small subunit family. Oligomeric complex that consists of at least the alpha, beta, beta', gamma, delta, epsilon and zeta subunits.

The protein localises to the cytoplasm. Its subcellular location is the golgi apparatus membrane. The protein resides in the cytoplasmic vesicle. It localises to the COPI-coated vesicle membrane. In terms of biological role, the coatomer is a cytosolic protein complex that binds to dilysine motifs and reversibly associates with Golgi non-clathrin-coated vesicles, which further mediate biosynthetic protein transport from the ER, via the Golgi up to the trans Golgi network. Coatomer complex is required for budding from Golgi membranes, and is essential for the retrograde Golgi-to-ER transport of dilysine-tagged proteins. The zeta subunit may be involved in regulating the coat assembly and, hence, the rate of biosynthetic protein transport due to its association-dissociation properties with the coatomer complex. The chain is Coatomer subunit zeta-2 from Arabidopsis thaliana (Mouse-ear cress).